A 167-amino-acid polypeptide reads, in one-letter code: Histidinol dehydrogenase (167 aa).

Residues Q109 and H112 each coordinate Zn(2+).

This sequence belongs to the histidinol dehydrogenase family. In terms of assembly, homodimer. The cofactor is Zn(2+).

The catalysed reaction is L-histidinol + 2 NAD(+) + H2O = L-histidine + 2 NADH + 3 H(+). Its pathway is amino-acid biosynthesis; L-histidine biosynthesis; L-histidine from 5-phospho-alpha-D-ribose 1-diphosphate: step 9/9. Catalyzes the sequential NAD-dependent oxidations of L-histidinol to L-histidinaldehyde and then to L-histidine. The polypeptide is Histidinol dehydrogenase (hisD) (Salmonella enteritidis).